Here is a 624-residue protein sequence, read N- to C-terminus: MRFHRQGTAATVGVLLIVLLGFCWKLSESYGIVSTALPHKQPATKITDTPSIRWDNYHEFVRDIDFDNSTAIFNSIRAALRQSPSDIHPVGVSYFPAVIPKGTLMYHAGSKVPTTFEWLAMDHEFSYSFGLRSPSYGRKSLERRHGRFGNGTHGDHPKGPPPPPPPDEKDRGSQKMLTYRAARDLNKFLYLDGASAAKTDSGEMDTQLMLSNVIKEKLNLTDDGENERMAERLYAARICKWGKPFGLDGIIRVEVGFEVVLCDFSADNVELVSMLEMVQPNQYLGLPAPTVISKEEGWPLDENGNLVEDQLTDDQKAILEREDGWEKTFSNFNAVKSFNQLRAGTAHDNGEHRIHIDYRYLVSGINRTYIAPDPNNRRLLDEGMTWEKQLDMVDDLEKALEVGFDATQSMDWQLAFDELVLKFAPLLKSVSNILNSNGDINESIAINATALTLNFCLRFEPASNNSDEFGSGKDFAVYQYVSPYQALKTDADFLIWSSAVSVVGEIVDAIYKVNDLLIPEVYSFMTDNTTSSDLIKNVETARSTIDGLIESLGWIELNYRCERQCNWDEVCYTPSWGPSPMGMTEPGSHNEGFGTHFDESRQRLVINSKLQCININDLMVNRNH.

Residues 1–29 (MRFHRQGTAATVGVLLIVLLGFCWKLSES) form the signal peptide. Residues Asn68, Asn150, Asn219, Asn366, Asn441, Asn447, Asn464, and Asn528 are each glycosylated (N-linked (GlcNAc...) asparagine). Residues 141 to 174 (LERRHGRFGNGTHGDHPKGPPPPPPPDEKDRGSQ) are disordered.

Its subcellular location is the secreted. This is an uncharacterized protein from Saccharomyces cerevisiae (strain ATCC 204508 / S288c) (Baker's yeast).